Here is a 161-residue protein sequence, read N- to C-terminus: 18.1 kDa class I heat shock protein (161 aa).

Residues 47–161 enclose the sHSP domain; sequence ETAAFAGARI…PDVKSIQVTG (115 aa).

Belongs to the small heat shock protein (HSP20) family. In terms of assembly, may form oligomeric structures.

Its subcellular location is the cytoplasm. This Oryza sativa subsp. japonica (Rice) protein is 18.1 kDa class I heat shock protein (HSP18.1).